The primary structure comprises 84 residues: Putative UPF0320 protein YAL068W-A (84 aa).

This sequence belongs to the UPF0320 family.

The polypeptide is Putative UPF0320 protein YAL068W-A (Saccharomyces cerevisiae (strain ATCC 204508 / S288c) (Baker's yeast)).